We begin with the raw amino-acid sequence, 121 residues long: MARIAGVDIPRDKRVVISLTYIYGIGKPTAQKILKEAGVSEDTRVRDLTEEELGRIREIVGRLKVEGDLRREVSLNIKRLMEIGCYRGLRHRRGLPVRGQNTKNNARTRKGPRRTVANKKK.

Residues 94 to 121 (GLPVRGQNTKNNARTRKGPRRTVANKKK) form a disordered region. The span at 106–121 (ARTRKGPRRTVANKKK) shows a compositional bias: basic residues.

Belongs to the universal ribosomal protein uS13 family. As to quaternary structure, part of the 30S ribosomal subunit. Forms a loose heterodimer with protein S19. Forms two bridges to the 50S subunit in the 70S ribosome.

Located at the top of the head of the 30S subunit, it contacts several helices of the 16S rRNA. In the 70S ribosome it contacts the 23S rRNA (bridge B1a) and protein L5 of the 50S subunit (bridge B1b), connecting the 2 subunits; these bridges are implicated in subunit movement. Contacts the tRNAs in the A and P-sites. The protein is Small ribosomal subunit protein uS13 of Geobacillus kaustophilus (strain HTA426).